The primary structure comprises 444 residues: ATP-dependent protease ATPase subunit HslU (444 aa).

Residues I20 and 62–67 (GVGKTE) contribute to the ATP site. The tract at residues 130–158 (EDRILDALVPPPRGASGEPERGEDNSARQ) is disordered. ATP is bound by residues D257, E322, and R394.

It belongs to the ClpX chaperone family. HslU subfamily. A double ring-shaped homohexamer of HslV is capped on each side by a ring-shaped HslU homohexamer. The assembly of the HslU/HslV complex is dependent on binding of ATP.

It localises to the cytoplasm. In terms of biological role, ATPase subunit of a proteasome-like degradation complex; this subunit has chaperone activity. The binding of ATP and its subsequent hydrolysis by HslU are essential for unfolding of protein substrates subsequently hydrolyzed by HslV. HslU recognizes the N-terminal part of its protein substrates and unfolds these before they are guided to HslV for hydrolysis. This chain is ATP-dependent protease ATPase subunit HslU, found in Bordetella parapertussis (strain 12822 / ATCC BAA-587 / NCTC 13253).